Here is a 310-residue protein sequence, read N- to C-terminus: MAKIVVALGGNALGKSPQEQLELVKNTAKSLVGLITKGHEIVISHGNGPQVGSINLGLNYAAEHNQGPAFPFAECGAMSQAYIGYQLQESLQNELHSIGMDKQVVTLVTQVEVDENDPAFNNPSKPIGLFYNKEEAEQIQKEKGFIFVEDAGRGYRRVVPSPQPISIIELESIKTLIKNDTLVIAAGGGGIPVIREQHDGFKGIDAVIDKDKTSALLGANIQCDQLIILTAIDYVYINFNTENQQPLKTTNVDELKRYIDENQFAKGSMLPKIEAAISFIENNPKGSVLITSLNELDAALEGKVGTVIKK.

The protein belongs to the carbamate kinase family.

The protein resides in the cytoplasm. It carries out the reaction hydrogencarbonate + NH4(+) + ATP = carbamoyl phosphate + ADP + H2O + H(+). The protein operates within metabolic intermediate metabolism; carbamoyl phosphate degradation; CO(2) and NH(3) from carbamoyl phosphate: step 1/1. The polypeptide is Carbamate kinase 1 (arcC1) (Staphylococcus aureus (strain COL)).